Reading from the N-terminus, the 180-residue chain is Interleukin-17B (180 aa).

A signal peptide spans 1 to 20 (MDWPHNLLFLLTISIFLGLG). A disordered region spans residues 22 to 44 (PRSPKSKRKGQGRPGPLAPGPHQ). Asparagine 75 carries an N-linked (GlcNAc...) asparagine glycan. Intrachain disulfides connect cysteine 121/cysteine 176 and cysteine 126/cysteine 178.

This sequence belongs to the IL-17 family. Expressed in adult pancreas, small intestine, stomach, spinal cord and testis. Less pronounced expression in prostate, colon mucosal lining, and ovary.

The protein localises to the secreted. Its function is as follows. Stimulates the release of tumor necrosis factor alpha and IL-1-beta from the monocytic cell line THP-1. The chain is Interleukin-17B (IL17B) from Homo sapiens (Human).